The chain runs to 147 residues: E3 ubiquitin-protein ligase RHA2B (147 aa).

An RING-type; atypical zinc finger spans residues 74–116 (CIVCLSKLKTGEEVRKLDCRHVFHKQCLEGWLQHLNFNCPLCR).

Interacts with NAC19. In terms of tissue distribution, expressed in vascular tissue, root tips, embryos and pistils.

Its subcellular location is the cytoplasm. The protein resides in the nucleus. It carries out the reaction S-ubiquitinyl-[E2 ubiquitin-conjugating enzyme]-L-cysteine + [acceptor protein]-L-lysine = [E2 ubiquitin-conjugating enzyme]-L-cysteine + N(6)-ubiquitinyl-[acceptor protein]-L-lysine.. The protein operates within protein modification; protein ubiquitination. E3 ubiquitin-protein ligase involved in the positive regulation of abscisic acid (ABA) signaling and responses to salt and osmotic stresses during seed germination and early seedling development. Acts additively with RHA2A in regulating ABA signaling and drought response. Possesses E3 ubiquitin ligase activity in vitro. In Arabidopsis thaliana (Mouse-ear cress), this protein is E3 ubiquitin-protein ligase RHA2B.